Here is a 428-residue protein sequence, read N- to C-terminus: MSTIIDIIGREVLDSRGNPTVEATAVLESGVVASAIVPSGASTGANEALELRDGDKKRFLGKGVLKAVENINTKIADLLIGEESEDQVRIDRLMIEADGTENKSNLGANAILAVSLAVARATAIEKEMPLYRYLGGVNAKVLPVPLMNVINGGAHADNELDFQEFMIVPVCGGSFKEALRAGVETFHVLKSVLKEKGYSTNVGDEGGFAPALRETKEALDMLMLAIDKAGYTPGEDIFIALDAASSEFYKDGKYLFEKRELTSDDMIILYEEIVGTYPVISIEDGLAENDWEGWKNLTQALGNKVQLVGDDLFTTNPKIIKEGIKNNIANSVLIKLNQIGTLTETLDAIEMARINNYTAIISHRSGESEDTFIADLAVATNAGQIKTGSASRTDRVAKYNQLIRIEEELGENAIFKGKQAFKKFQFEE.

Position 163 (Gln-163) interacts with (2R)-2-phosphoglycerate. Catalysis depends on Glu-205, which acts as the Proton donor. The Mg(2+) site is built by Asp-242, Glu-283, and Asp-310. 4 residues coordinate (2R)-2-phosphoglycerate: Lys-335, Arg-364, Ser-365, and Lys-386. Lys-335 functions as the Proton acceptor in the catalytic mechanism.

Belongs to the enolase family. Mg(2+) is required as a cofactor.

The protein resides in the cytoplasm. It is found in the secreted. The protein localises to the cell surface. The enzyme catalyses (2R)-2-phosphoglycerate = phosphoenolpyruvate + H2O. Its pathway is carbohydrate degradation; glycolysis; pyruvate from D-glyceraldehyde 3-phosphate: step 4/5. Catalyzes the reversible conversion of 2-phosphoglycerate (2-PG) into phosphoenolpyruvate (PEP). It is essential for the degradation of carbohydrates via glycolysis. This Sulfurihydrogenibium sp. (strain YO3AOP1) protein is Enolase.